The primary structure comprises 141 residues: MAKELTLSIIKPDAVAKSVIGEIYTRFEKAGLDIVAAKMTQLSREQAESFYDIHRARPFFKDLVDFMISGPVMIQVLKGENAVAKNREIMGATNPKEAAPGTIRADFADSIDANAVHGSDSLENAAREIAFFFEQHELCNR.

Residues Lys11, Phe59, Arg87, Thr93, Arg104, and Asn114 each contribute to the ATP site. The Pros-phosphohistidine intermediate role is filled by His117.

Belongs to the NDK family. As to quaternary structure, homotetramer. Mg(2+) serves as cofactor.

It localises to the cytoplasm. The enzyme catalyses a 2'-deoxyribonucleoside 5'-diphosphate + ATP = a 2'-deoxyribonucleoside 5'-triphosphate + ADP. It carries out the reaction a ribonucleoside 5'-diphosphate + ATP = a ribonucleoside 5'-triphosphate + ADP. In terms of biological role, major role in the synthesis of nucleoside triphosphates other than ATP. The ATP gamma phosphate is transferred to the NDP beta phosphate via a ping-pong mechanism, using a phosphorylated active-site intermediate. This chain is Nucleoside diphosphate kinase, found in Legionella pneumophila subsp. pneumophila (strain Philadelphia 1 / ATCC 33152 / DSM 7513).